The sequence spans 828 residues: USP6 N-terminal-like protein (828 aa).

M1 is subject to N-acetylmethionine. Residues 100-292 (GIPLQLRGEV…RIWDIYIFEG (193 aa)) form the Rab-GAP TBC domain. Positions 355 to 367 (DLPEPGKEDEYPK) are enriched in basic and acidic residues. A disordered region spans residues 355-722 (DLPEPGKEDE…NSGSPKNGKL (368 aa)). S391, S396, and S400 each carry phosphoserine. The segment covering 434-451 (KSVEEESKKLKDEADFQR) has biased composition (basic and acidic residues). A compositionally biased stretch (low complexity) spans 465–478 (NHAAANQNSNATSN). 2 stretches are compositionally biased toward basic and acidic residues: residues 498–508 (RTAKYTMEGKG) and 535–544 (KALDAEDGKR). S546 and S549 each carry phosphoserine. Y582 carries the phosphotyrosine modification. S585 carries the post-translational modification Phosphoserine. Over residues 592–603 (PSSSPSKVSNKF) the composition is skewed to polar residues. 5 positions are modified to phosphoserine: S642, S655, S659, S676, and S680. 2 stretches are compositionally biased toward polar residues: residues 648–666 (TANS…QLNP) and 673–683 (STLSVSASPEK). Positions 686–697 (SRPSPLVLPSSR) are enriched in low complexity. A Phosphoserine modification is found at S716. Y729 is modified (phosphotyrosine). The tract at residues 789–817 (KASPAAEDASPSGYPYSGPPPPAYHYRNR) is disordered.

As to quaternary structure, interacts with EPS8. As to expression, widely expressed.

The protein localises to the golgi apparatus. It localises to the cytoplasmic vesicle. Acts as a GTPase-activating protein for RAB5A and RAB43. Involved in receptor trafficking. In complex with EPS8 inhibits internalization of EGFR. Involved in retrograde transport from the endocytic pathway to the Golgi apparatus. Involved in the transport of Shiga toxin from early and recycling endosomes to the trans-Golgi network. Required for structural integrity of the Golgi complex. The protein is USP6 N-terminal-like protein (USP6NL) of Homo sapiens (Human).